Reading from the N-terminus, the 161-residue chain is Putative pre-16S rRNA nuclease (161 aa).

The protein belongs to the YqgF nuclease family.

The protein localises to the cytoplasm. In terms of biological role, could be a nuclease involved in processing of the 5'-end of pre-16S rRNA. This Prochlorococcus marinus (strain MIT 9313) protein is Putative pre-16S rRNA nuclease.